Reading from the N-terminus, the 273-residue chain is Dermonecrotic toxin LapSicTox-alphaII1 (273 aa).

Residue H5 is part of the active site. Residues E25 and D27 each coordinate Mg(2+). H41 acts as the Nucleophile in catalysis. 2 cysteine pairs are disulfide-bonded: C45-C51 and C47-C191. D85 provides a ligand contact to Mg(2+).

The protein belongs to the arthropod phospholipase D family. Class II subfamily. It depends on Mg(2+) as a cofactor. Expressed by the venom gland.

It is found in the secreted. The enzyme catalyses an N-(acyl)-sphingosylphosphocholine = an N-(acyl)-sphingosyl-1,3-cyclic phosphate + choline. It carries out the reaction an N-(acyl)-sphingosylphosphoethanolamine = an N-(acyl)-sphingosyl-1,3-cyclic phosphate + ethanolamine. The catalysed reaction is a 1-acyl-sn-glycero-3-phosphocholine = a 1-acyl-sn-glycero-2,3-cyclic phosphate + choline. It catalyses the reaction a 1-acyl-sn-glycero-3-phosphoethanolamine = a 1-acyl-sn-glycero-2,3-cyclic phosphate + ethanolamine. Its function is as follows. Dermonecrotic toxins cleave the phosphodiester linkage between the phosphate and headgroup of certain phospholipids (sphingolipid and lysolipid substrates), forming an alcohol (often choline) and a cyclic phosphate. This toxin acts on sphingomyelin (SM). It may also act on ceramide phosphoethanolamine (CPE), lysophosphatidylcholine (LPC) and lysophosphatidylethanolamine (LPE), but not on lysophosphatidylserine (LPS), and lysophosphatidylglycerol (LPG). It acts by transphosphatidylation, releasing exclusively cyclic phosphate products as second products. Induces dermonecrosis, hemolysis, increased vascular permeability, edema, inflammatory response, and platelet aggregation. This chain is Dermonecrotic toxin LapSicTox-alphaII1, found in Loxosceles apachea (Apache recluse spider).